A 226-amino-acid polypeptide reads, in one-letter code: Brain acid soluble protein 1 (226 aa).

A compositionally biased stretch (basic residues) spans 1 to 11; the sequence is MGGKLSKKKKG. The segment at 1–226 is disordered; sequence MGGKLSKKKK…SSEQSVAVKE (226 aa). Glycine 2 carries N-myristoyl glycine lipidation. The segment covering 15-27 has biased composition (basic and acidic residues); that stretch reads NDEKAKDKDKKAE. Lysine 25 is covalently cross-linked (Glycyl lysine isopeptide (Lys-Gly) (interchain with G-Cter in SUMO2)). Phosphothreonine is present on residues threonine 31 and threonine 36. Residue serine 40 is modified to Phosphoserine. The segment covering 49 to 94 has biased composition (basic and acidic residues); that stretch reads TEVKESTEEKPKDAADGEAKAEEKEADKAAAAKEEAPKAEPEKSEG. A Glycyl lysine isopeptide (Lys-Gly) (interchain with G-Cter in SUMO2) cross-link involves residue lysine 86. A phosphoserine mark is found at serine 92, serine 128, and serine 131. Composition is skewed to low complexity over residues 106 to 140 and 150 to 226; these read PEQE…GAAP and APAA…AVKE. A Glycyl lysine isopeptide (Lys-Gly) (interchain with G-Cter in SUMO2) cross-link involves residue lysine 159. 6 positions are modified to phosphoserine: serine 160, serine 167, serine 169, serine 173, serine 192, and serine 218.

Belongs to the BASP1 family.

The protein resides in the cell membrane. Its subcellular location is the cell projection. The protein localises to the growth cone. The sequence is that of Brain acid soluble protein 1 (Basp1) from Mus musculus (Mouse).